The primary structure comprises 361 residues: Mitogen-activated protein kinase 14A (361 aa).

The Protein kinase domain occupies 25–309 (YQNLSPVGSG…AAEALAHPYF (285 aa)). ATP-binding positions include 31 to 39 (VGSGAYGSV) and lysine 54. Aspartate 169 serves as the catalytic Proton acceptor. A Phosphothreonine; by MAP2K3 modification is found at threonine 181. A TXY motif is present at residues 181–183 (TGY). Residue tyrosine 183 is modified to Phosphotyrosine; by MAP2K3.

The protein belongs to the protein kinase superfamily. CMGC Ser/Thr protein kinase family. MAP kinase subfamily. Requires Mg(2+) as cofactor. In terms of processing, dually phosphorylated on Thr-181 and Tyr-183, which activates the enzyme.

It localises to the cytoplasm. The protein localises to the nucleus. The catalysed reaction is L-seryl-[protein] + ATP = O-phospho-L-seryl-[protein] + ADP + H(+). It catalyses the reaction L-threonyl-[protein] + ATP = O-phospho-L-threonyl-[protein] + ADP + H(+). With respect to regulation, activated by threonine and tyrosine phosphorylation by the dual specificity kinase, MKK3. Functionally, serine/threonine kinase which acts as an essential component of the MAP kinase signal transduction pathway. Mapk14a is one of the four p38 MAPKs which play an important role in the cascades of cellular responses evoked by extracellular stimuli such as pro-inflammatory cytokines or physical stress leading to direct activation of transcription factors. Accordingly, p38 MAPKs phosphorylate a broad range of proteins and it has been estimated that they may have approximately 200 to 300 substrates each. Some of the targets are downstream kinases which are activated through phosphorylation and further phosphorylate additional targets. Required for cytokinesis on the future dorsal side of the blastodisc, suggesting a role in symmetrical and synchronous blastomere cleavage. This is Mitogen-activated protein kinase 14A (mapk14a) from Danio rerio (Zebrafish).